Here is a 364-residue protein sequence, read N- to C-terminus: S-adenosylmethionine:tRNA ribosyltransferase-isomerase (364 aa).

The protein belongs to the QueA family. In terms of assembly, monomer.

The protein localises to the cytoplasm. It carries out the reaction 7-aminomethyl-7-carbaguanosine(34) in tRNA + S-adenosyl-L-methionine = epoxyqueuosine(34) in tRNA + adenine + L-methionine + 2 H(+). The protein operates within tRNA modification; tRNA-queuosine biosynthesis. Its function is as follows. Transfers and isomerizes the ribose moiety from AdoMet to the 7-aminomethyl group of 7-deazaguanine (preQ1-tRNA) to give epoxyqueuosine (oQ-tRNA). The sequence is that of S-adenosylmethionine:tRNA ribosyltransferase-isomerase from Lachnoclostridium phytofermentans (strain ATCC 700394 / DSM 18823 / ISDg) (Clostridium phytofermentans).